The sequence spans 326 residues: Deoxyuridine 5'-triphosphate nucleotidohydrolase (326 aa).

Residues 218–220 and 321–322 contribute to the substrate site; these read RSS and FG.

The protein belongs to the dUTPase family. Requires Mg(2+) as cofactor.

The enzyme catalyses dUTP + H2O = dUMP + diphosphate + H(+). Involved in nucleotide metabolism: produces dUMP, the immediate precursor of thymidine nucleotides and decreases the intracellular concentration of dUTP to avoid uracil incorporation into viral DNA. The sequence is that of Deoxyuridine 5'-triphosphate nucleotidohydrolase from Equus caballus (Horse).